The primary structure comprises 133 residues: Profilin Sal k 4.0301 (133 aa).

An intrachain disulfide couples cysteine 95 to cysteine 117.

It belongs to the profilin family. Occurs in many kinds of cells as a complex with monomeric actin in a 1:1 ratio. As to expression, expressed in pollen (at protein and mRNA level).

Its subcellular location is the cytoplasm. The protein localises to the cytoskeleton. In terms of biological role, binds to actin and affects the structure of the cytoskeleton. At high concentrations, profilin prevents the polymerization of actin, whereas it enhances it at low concentrations. The protein is Profilin Sal k 4.0301 of Kali turgidum (Prickly saltwort).